We begin with the raw amino-acid sequence, 251 residues long: Cell division protein ZapD (251 aa).

The protein belongs to the ZapD family. Interacts with FtsZ.

The protein localises to the cytoplasm. Functionally, cell division factor that enhances FtsZ-ring assembly. Directly interacts with FtsZ and promotes bundling of FtsZ protofilaments, with a reduction in FtsZ GTPase activity. This Burkholderia multivorans (strain ATCC 17616 / 249) protein is Cell division protein ZapD.